Consider the following 147-residue polypeptide: UPF0178 protein VP2328 (147 aa).

The protein belongs to the UPF0178 family.

This Vibrio parahaemolyticus serotype O3:K6 (strain RIMD 2210633) protein is UPF0178 protein VP2328.